Consider the following 379-residue polypeptide: Sialidase-2 (379 aa).

The FRIP motif signature appears at 20–23; sequence YRIP. Residues R21 and R41 each coordinate substrate. D46 acts as the Proton acceptor in catalysis. Residues 127–138 form a BNR 1 repeat; that stretch reads ITSTDHGKTWSA. 2 residues coordinate substrate: Y179 and Y181. The stretch at 197–208 is one BNR 2 repeat; it reads FLSHDHGSTWEL. Positions 218, 237, and 303 each coordinate substrate. The Nucleophile role is filled by Y333. E354 is a catalytic residue.

Belongs to the glycosyl hydrolase 33 family.

The protein localises to the cytoplasm. The enzyme catalyses Hydrolysis of alpha-(2-&gt;3)-, alpha-(2-&gt;6)-, alpha-(2-&gt;8)- glycosidic linkages of terminal sialic acid residues in oligosaccharides, glycoproteins, glycolipids, colominic acid and synthetic substrates.. Its function is as follows. Catalyzes the removal of sialic acid (N-acetylneuraminic acid) moieties from glycoproteins, oligosaccharides and gangliosides. In Cricetulus griseus (Chinese hamster), this protein is Sialidase-2 (NEU2).